The sequence spans 494 residues: Cytochrome P450 2G1 (494 aa).

A heme-binding site is contributed by Cys439.

The protein belongs to the cytochrome P450 family. Heme is required as a cofactor. Olfactory epithelium.

The protein resides in the endoplasmic reticulum membrane. It localises to the microsome membrane. It carries out the reaction an organic molecule + reduced [NADPH--hemoprotein reductase] + O2 = an alcohol + oxidized [NADPH--hemoprotein reductase] + H2O + H(+). Functionally, cytochromes P450 are a group of heme-thiolate monooxygenases. This isozyme seems to be implicated in olfaction. The polypeptide is Cytochrome P450 2G1 (Cyp2g1) (Rattus norvegicus (Rat)).